We begin with the raw amino-acid sequence, 576 residues long: Vesicular glutamate transporter 1 (576 aa).

The Cytoplasmic segment spans residues 1–63 (MEFRKEEFKK…CTCFGLPRRY (63 aa)). The chain crosses the membrane as a helical span at residues 64–84 (IIAIMSGLGFCISFGIRCNLG). Over 85–116 (VAIVSMVNNNTVYKGNKIVIEQAQFTWDPETV) the chain is Vesicular. N-linked (GlcNAc...) asparagine glycosylation is present at Asn93. A helical membrane pass occupies residues 117-137 (GMIHGSFFWGYIVTQIPGGYI). Over 138–140 (CQK) the chain is Cytoplasmic. Residues 141-161 (FAANRVFGFAIVATSTLNMLI) form a helical membrane-spanning segment. Residues 162-168 (PSAARVH) are Vesicular-facing. A helical transmembrane segment spans residues 169–189 (FACVICVRILQGLVEGVTYPA). Residues 190 to 208 (CHGIWSKWAPPLERSRLAT) lie on the Cytoplasmic side of the membrane. The chain crosses the membrane as a helical span at residues 209–229 (TAFCGSYAGAVVAMPLAGVLV). Residues 230–236 (QYSGWSS) lie on the Vesicular side of the membrane. Residues 237–257 (VFYVYGSFGIMWYMFWILVSY) form a helical membrane-spanning segment. The Cytoplasmic portion of the chain corresponds to 258–302 (ESPAIHPTISEEEKKYIEESIGESTGLMNPMAKFKAPWRKFFTSM). A helical membrane pass occupies residues 303–323 (PVYAIIVANFCRSWTFYLLLI). Over 324-341 (SQPAYFEEVFGFEISKVG) the chain is Vesicular. A helical membrane pass occupies residues 342-362 (LLSALPHLVMTIIVPIGGQIA). Residues 363 to 378 (DFLRTKRIMSTTNVRK) lie on the Cytoplasmic side of the membrane. Residues 379 to 399 (MMNCGGFGMEATLLLVVGYSH) form a helical membrane-spanning segment. Residues 400 to 401 (SR) are Vesicular-facing. The chain crosses the membrane as a helical span at residues 402 to 422 (GVAISFLVLAVGFSGFAISGF). Residues 423–435 (NVNHLDIAPRYAS) lie on the Cytoplasmic side of the membrane. Residues 436-456 (ILMGISNGVGTLSGMVCPLIV) form a helical membrane-spanning segment. The Vesicular portion of the chain corresponds to 457 to 469 (GAMTKHKTREEWQ). Residues 470–490 (YVFLIASLVHYGGVLFYGIFA) traverse the membrane as a helical segment. Topologically, residues 491 to 576 (SGEKQPWAEP…YGTVAERDLS (86 aa)) are cytoplasmic. The tract at residues 517–547 (ADESEEQSQAYGAYGSYGATQTTSQQNGGWT) is disordered. Residues 534–545 (GATQTTSQQNGG) are compositionally biased toward polar residues.

This sequence belongs to the major facilitator superfamily. Sodium/anion cotransporter family. VGLUT subfamily.

The protein resides in the cytoplasmic vesicle. It localises to the secretory vesicle. Its subcellular location is the synaptic vesicle membrane. The protein localises to the cell membrane. It is found in the synapse. The protein resides in the synaptosome. The enzyme catalyses L-glutamate(out) = L-glutamate(in). It carries out the reaction chloride(in) = chloride(out). It catalyses the reaction 3 Na(+)(out) + phosphate(out) = 3 Na(+)(in) + phosphate(in). The catalysed reaction is phosphate(in) = phosphate(out). The enzyme catalyses K(+)(in) + H(+)(out) = K(+)(out) + H(+)(in). Its activity is regulated as follows. Chloride channel activity is allosterically activated by lumenal H(+) and Cl(-) leading to synaptic vesicles acidification. The L-glutamate transport activity is allosterically activated by lumenal H(+) and Cl(-). The allosteric activation by H(+) efficiently prevents non-vesicular efflux across the plasma membrane, thereby restricting L-glutamate transport activity to acidic membranes such as synaptic vesicles. Its function is as follows. Multifunctional transporter that transports L-glutamate as well as multiple ions such as chloride, proton, potassium, sodium and phosphate. At the synaptic vesicle membrane, mainly functions as an uniporter which transports preferentially L-glutamate but also phosphate from the cytoplasm into synaptic vesicles at presynaptic nerve terminals of excitatory neural cells. The L-glutamate or phosphate uniporter activity is electrogenic and is driven by the proton electrochemical gradient, mainly by the electrical gradient established by the vacuolar H(+)-ATPase across the synaptic vesicle membrane. In addition, functions as a chloride channel that allows a chloride permeation through the synaptic vesicle membrane that affects the proton electrochemical gradient and promotes synaptic vesicles acidification. Moreover, may function as a K(+)/H(+) antiport allowing to maintain the electrical gradient and to decrease chemical gradient and therefore sustain vesicular glutamate uptake. The vesicular K(+)/H(+) antiport activity is electroneutral. At the plasma membrane, following exocytosis, functions as a symporter of Na(+) and phosphate from the extracellular space to the cytoplasm allowing synaptic phosphate homeostasis regulation. The symporter activity is driven by an inside negative membrane potential and is electrogenic. Is necessary for synaptic signaling of visual-evoked responses from photoreceptors. This Xenopus tropicalis (Western clawed frog) protein is Vesicular glutamate transporter 1.